Reading from the N-terminus, the 1121-residue chain is Cilia- and flagella-associated protein 70 (1121 aa).

Basic and acidic residues predominate over residues 410 to 428 (NLKEDKPVKEKDIDGRPRP). Residues 410–457 (NLKEDKPVKEKDIDGRPRPGDVQAPSIKSQSSDTPLEGEPPLSHNPEG) form a disordered region. TPR repeat units lie at residues 635–668 (SEQLQLFAFEAEVNENFEMAAAYYKERLVREPQN), 669–702 (LDHWLDYGAFCLLTEDNIKAQECFQKALSLNQSH), and 704–736 (HSLLLCGVLAVLLENYEQAEIFFEDATCLEPTN). Disordered stretches follow at residues 778-802 (KQKSTGVEDTEERGKRESSLGPWGI) and 836-858 (QSDSQEPILTTQTWDPSISQKPS). TPR repeat units follow at residues 929–962 (CEYYLVLAQTHILKKNFAKAEEYLQQAAQMDYLN), 963–996 (PNVWGLKGHLYFLSGNHSEAKACYERTISFVVDA), 1000–1033 (HFIFLRLGLIYLEEKEYEKAKKTYMQACKRSPSC), 1035–1066 (TWLGLGIACYRLEELTEAEDALSEANALNNYN), and 1068–1100 (EVWAYLALVCLKVGRQLEAEQAYKYMIKLKLKD).

It belongs to the CFAP70 family. Expressed in testis.

It is found in the cell projection. It localises to the cilium. Its subcellular location is the flagellum. The protein resides in the cytoplasm. The protein localises to the cytoskeleton. It is found in the flagellum basal body. It localises to the cilium axoneme. Its function is as follows. Axoneme-binding protein that plays a role in the regulation of ciliary motility and cilium length. In Homo sapiens (Human), this protein is Cilia- and flagella-associated protein 70.